Reading from the N-terminus, the 130-residue chain is Small ribosomal subunit protein uS11 (130 aa).

The protein belongs to the universal ribosomal protein uS11 family. In terms of assembly, part of the 30S ribosomal subunit. Interacts with proteins S7 and S18. Binds to IF-3.

Its function is as follows. Located on the platform of the 30S subunit, it bridges several disparate RNA helices of the 16S rRNA. Forms part of the Shine-Dalgarno cleft in the 70S ribosome. The chain is Small ribosomal subunit protein uS11 from Prochlorococcus marinus (strain NATL2A).